The primary structure comprises 498 residues: Thiamine transporter 1 (498 aa).

At methionine 1 the chain carries N-acetylmethionine. Residues 1–28 (MDVPARVSRRAAAAAARMLLRTARVPRE) lie on the Cytoplasmic side of the membrane. Residues 29 to 46 (CWFLPTALLCAYGFFANL) form a helical membrane-spanning segment. At 47-71 (RPSEPFLTPYLLGPDKNLTERQVYN) the chain is on the extracellular side. A glycan (N-linked (GlcNAc...) asparagine) is linked at asparagine 63. A helical transmembrane segment spans residues 72 to 92 (EIYPVWTYSYLLLLFPVFLAT). Topologically, residues 93 to 105 (DYLRYKPVILLQG) are cytoplasmic. A helical membrane pass occupies residues 106–126 (LSLIVTWFMLLYAQGLLAIQF). Residues 127 to 128 (LE) are Extracellular-facing. Residues 129–149 (FFYGIATATEIAYYSYIYTVV) form a helical membrane-spanning segment. Topologically, residues 150 to 164 (DLGMYQKVTSYCRSA) are cytoplasmic. The helical transmembrane segment at 165-185 (TLVGFTVGSVLGQILVSVVGW) threads the bilayer. A topological domain (extracellular) is located at residue serine 186. The chain crosses the membrane as a helical span at residues 187-207 (LFSLNVISLTCVSVAFAVAWF). The Cytoplasmic segment spans residues 208 to 295 (LPMPQKSLFF…DFLMCYSSRP (88 aa)). At serine 222 the chain carries Phosphoserine. The chain crosses the membrane as a helical span at residues 296-316 (LLCWSVWWALSTCGYFQVVNY). Residues 317–334 (AQGLWEKVMPSQNADIYN) lie on the Extracellular side of the membrane. The chain crosses the membrane as a helical span at residues 335–355 (GGVEAVSTLLGASAVFAVGYI). The Cytoplasmic portion of the chain corresponds to 356-360 (KLSWS). A helical transmembrane segment spans residues 361-381 (TWGEMTLFLCSLLIAAAVYVM). At 382–386 (DTVQS) the chain is on the extracellular side. Residues 387 to 407 (IWVCYASYVVFRIIYMVLITI) form a helical membrane-spanning segment. At 408–423 (ATFQIAANLSMERYAL) the chain is on the cytoplasmic side. A helical membrane pass occupies residues 424 to 444 (VFGVNTFIALALQTLLTLIVV). Topologically, residues 445-456 (DARGLGLCITTQ) are extracellular. Residues 457 to 477 (FLIYASYFAAISVVFLANGIV) form a helical membrane-spanning segment. The Cytoplasmic segment spans residues 478–498 (SIIKKCRKQEDPSSSPQASTS).

This sequence belongs to the reduced folate carrier (RFC) transporter (TC 2.A.48) family. In terms of assembly, interacts with TSPAN1; this interaction increases the stability of SLC19A2. Interacts with TMEM63B. Expressed in liver. Expressed in cochlear hair cells and duodenum (at protein level). Detected in pancreatic acinar cells (at protein level). Also expressed strongly in pancreatic islet cells. Expressed in the testis. As to expression, very highly expressed in liver, and also detected at lower levels in heart, testis, kidney, brain and spleen. In terms of tissue distribution, expressed at low levels in liver and spleen.

Its subcellular location is the cell membrane. The enzyme catalyses thiamine(out) + H(+)(in) = thiamine(in) + H(+)(out). It carries out the reaction pyridoxine(out) + n H(+)(out) = pyridoxine(in) + n H(+)(in). Functionally, high-affinity transporter for the intake of thiamine. Essential for spermatogenesis. Mediates H(+)-dependent pyridoxine transport. The polypeptide is Thiamine transporter 1 (Mus musculus (Mouse)).